Reading from the N-terminus, the 462-residue chain is Glycine--tRNA ligase (462 aa).

Residues Arg-101 and Glu-164 each coordinate substrate. Residues 196–198 (RNE), 206–211 (FRTREF), 283–284 (EL), and 327–330 (GVDR) each bind ATP. Position 211–215 (211–215 (FEQME)) interacts with substrate. Position 323 to 327 (323 to 327 (EPSAG)) interacts with substrate.

Belongs to the class-II aminoacyl-tRNA synthetase family. As to quaternary structure, homodimer.

Its subcellular location is the cytoplasm. It carries out the reaction tRNA(Gly) + glycine + ATP = glycyl-tRNA(Gly) + AMP + diphosphate. In terms of biological role, catalyzes the attachment of glycine to tRNA(Gly). The sequence is that of Glycine--tRNA ligase from Thermobifida fusca (strain YX).